We begin with the raw amino-acid sequence, 315 residues long: ATP synthase gamma chain (315 aa).

It belongs to the ATPase gamma chain family. F-type ATPases have 2 components, CF(1) - the catalytic core - and CF(0) - the membrane proton channel. CF(1) has five subunits: alpha(3), beta(3), gamma(1), delta(1), epsilon(1). CF(0) has three main subunits: a, b and c.

The protein localises to the cell membrane. Its function is as follows. Produces ATP from ADP in the presence of a proton gradient across the membrane. The gamma chain is believed to be important in regulating ATPase activity and the flow of protons through the CF(0) complex. This Latilactobacillus sakei subsp. sakei (strain 23K) (Lactobacillus sakei subsp. sakei) protein is ATP synthase gamma chain.